The sequence spans 74 residues: uncharacterized protein (74 aa).

This is an uncharacterized protein from Schizosaccharomyces pombe (strain 972 / ATCC 24843) (Fission yeast).